Reading from the N-terminus, the 877-residue chain is MATVGVLLLCLCLCLFAPRLCSSKEEGPLAARTVLAVAVTMEGALRAEAATGGRSSTGDVQRLAVYASLETDSRLRVRITDADHPRWEVPQDIIPRPAPGDVLHDAPPASSAPLQGRVLSPAGSDLVLTVHASPFRFTVSRRSTGDTLFDTAPGLVFRDKYLEVTSALPAGRASLYGLGEHTKSSFRLRHNDSFTLWNADIGASYVDVNLYGSHPFYMDVRAPGTAHGVLLLSSNGMDVLYGGSYVTYKVIGGVLDFYFFAGPNPLAVVDQYTQLIARPAPMPYWSFGFHQCRYGYLNVSDLERVVARYAKARIPLEVMWTDIDYMDGFKDFTLDRVNFTAAELRPFVDRLHRNAQKYVLILDPGIRVDPIDATYGTFVRGMQQDIFLKRNGTNFVGNVWPGDVYFPDFMHPAAAEFWAREISLFRRTIPVDGLWIDMNEISNFYNPEPMNALDDPPYRINNDGTGRPINNKTVRPLAVHYGGVTEYEEHNLFGLLEARATGRGVLRDTGRRPFVLSRSTFVGSGRYTAYWTGDNAATWGDLRYSINTMLSFGLFGMPMIGADICGFNGNTTEELCGRWIQLGAFYPFSRDHSAIFTVRRELYLWPSVAASGRKALGLRYQLLPYFYTLMYEAHMTGAPIARPLFFSYPHDVATYGVDRQFLLGRGVLVSPVLEPGPTTVDAYFPAGRWYRLYDYSLAVATRTGKHVRLPAPADTVNVHLTGGTILPLQQSALTTSRARRTAFHLLVALAEDGTASGYLFLDDGDSPEYGRRSDWSMVRFNYKIPNNKGAIKVKSEVVHNSYAQSRTLVISKVVLMGHRSPAAPKKLTVHVNSAEVEASSSAGTRYQNAGGLGGVAHIGGLSLVVGEEFELKVAMSY.

Residues 1 to 23 form the signal peptide; the sequence is MATVGVLLLCLCLCLFAPRLCSS. Residues 89–115 form a disordered region; it reads VPQDIIPRPAPGDVLHDAPPASSAPLQ. Residues asparagine 191, asparagine 298, asparagine 338, and asparagine 391 are each glycosylated (N-linked (GlcNAc...) asparagine). Active-site residues include aspartate 437 and glutamate 440. Residue asparagine 471 is glycosylated (N-linked (GlcNAc...) asparagine). Aspartate 534 serves as the catalytic Proton donor. N-linked (GlcNAc...) asparagine glycosylation occurs at asparagine 570.

This sequence belongs to the glycosyl hydrolase 31 family. As to expression, high levels seen in the aleurone and scutellum after germination, while low levels are found in developing seeds.

The enzyme catalyses Hydrolysis of terminal, non-reducing (1-&gt;4)-linked alpha-D-glucose residues with release of alpha-D-glucose.. The chain is Alpha-glucosidase from Hordeum vulgare (Barley).